A 981-amino-acid polypeptide reads, in one-letter code: Rab3 GTPase-activating protein catalytic subunit (981 aa).

Residues Ser-83, Ser-379, Ser-537, Ser-579, Ser-581, and Ser-590 each carry the phosphoserine modification. Residues 592–613 (TEELKGNGQESGKKGGPKEMAN) are disordered. Ser-664 carries the phosphoserine modification. Thr-908 bears the Phosphothreonine mark. Positions 908-937 (TPPEEELKRMGSPEERRQNSVSDFPPPAGR) are disordered. Residues 912–925 (EELKRMGSPEERRQ) are compositionally biased toward basic and acidic residues.

Belongs to the Rab3-GAP catalytic subunit family. The Rab3 GTPase-activating complex is a heterodimer composed of RAB3GAP1 and RAB3GAP2. The Rab3 GTPase-activating complex interacts with DMXL2. Interacts with LMAN1. Ubiquitous.

It is found in the cytoplasm. Its subcellular location is the endoplasmic reticulum. The protein resides in the golgi apparatus. The protein localises to the cis-Golgi network. Functionally, catalytic subunit of the Rab3 GTPase-activating (Rab3GAP) complex composed of RAB3GAP1 and RAB3GAP2, which has GTPase-activating protein (GAP) activity towards various Rab3 subfamily members (RAB3A, RAB3B, RAB3C and RAB3D), RAB5A and RAB43, and guanine nucleotide exchange factor (GEF) activity towards RAB18. As part of the Rab3GAP complex, acts as a GAP for Rab3 proteins by converting active RAB3-GTP to the inactive form RAB3-GDP. Rab3 proteins are involved in regulated exocytosis of neurotransmitters and hormones. The Rab3GAP complex, acts as a GEF for RAB18 by promoting the conversion of inactive RAB18-GDP to the active form RAB18-GTP. Recruits and stabilizes RAB18 at the cis-Golgi membrane in fibroblasts where RAB18 is most likely activated. Also involved in RAB18 recruitment at the endoplasmic reticulum (ER) membrane where it maintains proper ER structure. Required for normal eye and brain development. May participate in neurodevelopmental processes such as proliferation, migration and differentiation before synapse formation, and non-synaptic vesicular release of neurotransmitters. The chain is Rab3 GTPase-activating protein catalytic subunit from Homo sapiens (Human).